The sequence spans 238 residues: Orotate phosphoribosyltransferase (238 aa).

Residue Lys29 participates in 5-phospho-alpha-D-ribose 1-diphosphate binding. 37–38 contributes to the orotate binding site; sequence FF. 5-phospho-alpha-D-ribose 1-diphosphate contacts are provided by residues 87-88, Arg118, Lys119, Lys122, His124, and 144-152; these read YK and DDVITAGTA. Thr148 and Arg176 together coordinate orotate.

It belongs to the purine/pyrimidine phosphoribosyltransferase family. PyrE subfamily. Homodimer.

It carries out the reaction orotidine 5'-phosphate + diphosphate = orotate + 5-phospho-alpha-D-ribose 1-diphosphate. It functions in the pathway pyrimidine metabolism; UMP biosynthesis via de novo pathway; UMP from orotate: step 1/2. Its function is as follows. Catalyzes the transfer of a ribosyl phosphate group from 5-phosphoribose 1-diphosphate to orotate, leading to the formation of orotidine monophosphate (OMP). The sequence is that of Orotate phosphoribosyltransferase (URA5) from Coccidioides immitis (strain RS) (Valley fever fungus).